The sequence spans 188 residues: Meiotically up-regulated gene 94 protein (188 aa).

It localises to the cytoplasm. The protein localises to the nucleus. Its function is as follows. Has a role in meiosis. The chain is Meiotically up-regulated gene 94 protein (mug94) from Schizosaccharomyces pombe (strain 972 / ATCC 24843) (Fission yeast).